The sequence spans 534 residues: Probable cytochrome c oxidase subunit 1 (534 aa).

Helical transmembrane passes span 35–55 (IMYI…SLLF), 76–96 (VLIT…ALFS), 97–117 (GFGN…FPRL), 120–140 (ISFW…FIDG), 165–185 (VAIF…INLI), 202–222 (PLFV…MPVL), 254–274 (LFWF…FGIV), and 286–306 (IFGY…GFIV). Residue histidine 81 participates in Fe(II)-heme a binding. Residues histidine 260 and tyrosine 264 each contribute to the Cu cation site. The 1'-histidyl-3'-tyrosine (His-Tyr) cross-link spans 260 to 264 (HPEVY). Residues histidine 309 and histidine 310 each contribute to the Cu cation site. The next 2 helical transmembrane spans lie at 320–340 (ALIY…IKIF) and 357–377 (MLFA…GIIL). Residue histidine 395 participates in heme a3 binding. The next 3 membrane-spanning stretches (helical) occupy residues 396–416 (FHYT…YYWF), 433–453 (FWIT…LGLA), and 475–495 (IGAG…FYTL). Histidine 397 contributes to the Fe(II)-heme a binding site.

The protein belongs to the heme-copper respiratory oxidase family.

It localises to the cell membrane. It catalyses the reaction 4 Fe(II)-[cytochrome c] + O2 + 8 H(+)(in) = 4 Fe(III)-[cytochrome c] + 2 H2O + 4 H(+)(out). It functions in the pathway energy metabolism; oxidative phosphorylation. Functionally, cytochrome c oxidase is the component of the respiratory chain that catalyzes the reduction of oxygen to water. Subunits 1-3 form the functional core of the enzyme complex. CO I is the catalytic subunit of the enzyme. Electrons originating in cytochrome c are transferred via the copper A center of subunit 2 and heme A of subunit 1 to the bimetallic center formed by heme A3 and copper B. This chain is Probable cytochrome c oxidase subunit 1 (ctaD), found in Rickettsia prowazekii (strain Madrid E).